The chain runs to 357 residues: Chorismate synthase (357 aa).

Arg-46 is an NADP(+) binding site. Residues 123-125 (RSS), 235-236 (NA), Gly-275, 290-294 (KPTPS), and Arg-316 contribute to the FMN site.

The protein belongs to the chorismate synthase family. In terms of assembly, homotetramer. It depends on FMNH2 as a cofactor.

The catalysed reaction is 5-O-(1-carboxyvinyl)-3-phosphoshikimate = chorismate + phosphate. It functions in the pathway metabolic intermediate biosynthesis; chorismate biosynthesis; chorismate from D-erythrose 4-phosphate and phosphoenolpyruvate: step 7/7. Catalyzes the anti-1,4-elimination of the C-3 phosphate and the C-6 proR hydrogen from 5-enolpyruvylshikimate-3-phosphate (EPSP) to yield chorismate, which is the branch point compound that serves as the starting substrate for the three terminal pathways of aromatic amino acid biosynthesis. This reaction introduces a second double bond into the aromatic ring system. In Nitratiruptor sp. (strain SB155-2), this protein is Chorismate synthase.